The primary structure comprises 253 residues: 4-hydroxy-tetrahydrodipicolinate reductase (253 aa).

16–21 (GDTGRM) is an NAD(+) binding site. Arg-44 is a binding site for NADP(+). NAD(+) is bound by residues 85-87 (GTT) and 111-114 (CANT). Residue His-144 is the Proton donor/acceptor of the active site. His-145 lines the (S)-2,3,4,5-tetrahydrodipicolinate pocket. Catalysis depends on Lys-148, which acts as the Proton donor. 154–155 (GT) is a (S)-2,3,4,5-tetrahydrodipicolinate binding site.

It belongs to the DapB family.

It is found in the cytoplasm. The catalysed reaction is (S)-2,3,4,5-tetrahydrodipicolinate + NAD(+) + H2O = (2S,4S)-4-hydroxy-2,3,4,5-tetrahydrodipicolinate + NADH + H(+). It carries out the reaction (S)-2,3,4,5-tetrahydrodipicolinate + NADP(+) + H2O = (2S,4S)-4-hydroxy-2,3,4,5-tetrahydrodipicolinate + NADPH + H(+). The protein operates within amino-acid biosynthesis; L-lysine biosynthesis via DAP pathway; (S)-tetrahydrodipicolinate from L-aspartate: step 4/4. Functionally, catalyzes the conversion of 4-hydroxy-tetrahydrodipicolinate (HTPA) to tetrahydrodipicolinate. In Chlamydia trachomatis serovar A (strain ATCC VR-571B / DSM 19440 / HAR-13), this protein is 4-hydroxy-tetrahydrodipicolinate reductase.